An 82-amino-acid chain; its full sequence is Sulfur carrier protein TusA (82 aa).

Cys-19 functions as the Cysteine persulfide intermediate in the catalytic mechanism.

This sequence belongs to the sulfur carrier protein TusA family. Interacts with IscS.

Its subcellular location is the cytoplasm. It functions in the pathway tRNA modification. Functionally, sulfur carrier protein involved in sulfur trafficking in the cell. Part of a sulfur-relay system required for 2-thiolation during synthesis of 2-thiouridine of the modified wobble base 5-methylaminomethyl-2-thiouridine (mnm(5)s(2)U) in tRNA. Interacts with IscS and stimulates its cysteine desulfurase activity. Accepts an activated sulfur from IscS, which is then transferred to TusD, and thus determines the direction of sulfur flow from IscS to 2-thiouridine formation. Also appears to be involved in sulfur transfer for the biosynthesis of molybdopterin. This is Sulfur carrier protein TusA from Edwardsiella ictaluri (strain 93-146).